The sequence spans 867 residues: Nuclear body protein SP140 (867 aa).

Residues 22-138 (VAEIQNVEGQ…IYRSFQNVCY (117 aa)) form the HSR domain. Disordered regions lie at residues 260–341 (TYST…EEPQ), 365–432 (TPQV…SEEL), and 486–580 (IANN…KHKD). The segment covering 268 to 301 (KQGEEEGRNSPRKRNQDKEKYQESPEGRDKETFD) has biased composition (basic and acidic residues). Composition is skewed to acidic residues over residues 323–341 (EGEE…EEPQ) and 384–397 (EGEE…EMCD). The span at 404–416 (ASSSLARRGSVSS) shows a compositional bias: low complexity. 2 stretches are compositionally biased toward basic residues: residues 494-512 (KPKR…RMRM) and 567-577 (QKRVRSRASRK). The Nuclear localization signal motif lies at 495-514 (PKRKRRKKRGHGWSRMRMRR). An SAND domain is found at 580–661 (DETVDFKAPL…RWLMENGFLP (82 aa)). The PHD-type zinc-finger motif lies at 690 to 736 (LDECEVCRDGGELFCCDTCSRVFHEDCHIPPVEAERTPWNCIFCRMK). At threonine 726 the chain carries Phosphothreonine. A Bromo domain is found at 754 to 857 (QMCPEEQLKC…AEFEKNFKEV (104 aa)).

As to quaternary structure, interacts with PIN1. In terms of processing, phosphorylation at Thr-726 promotes binding of PIN1 and subsequent isomerization of Pro-727. As to expression, high levels in spleen and peripheral blood leukocytes, much lower levels in tonsils, thymus, prostate, ovary, small intestine, and colon. Very low levels in heart, brain, placenta, lung, liver, skeletal muscle, kidney, and pancreas. Not detected in brain, liver and muscle.

The protein localises to the nucleus. It localises to the PML body. It is found in the cytoplasm. Functionally, component of the nuclear body, also known as nuclear domain 10, PML oncogenic domain, and KR body. May be involved in the pathogenesis of acute promyelocytic leukemia and viral infection. May play a role in chromatin-mediated regulation of gene expression although it does not bind to histone H3 tails. In Homo sapiens (Human), this protein is Nuclear body protein SP140.